Here is a 403-residue protein sequence, read N- to C-terminus: Alkaline protease 1 (403 aa).

Positions 1-21 are cleaved as a signal peptide; the sequence is MQSIKRTLLLLGAVLPAVLAG. The propeptide occupies 22–121; the sequence is PIFPHRRAPT…VEEDQVWHLF (100 aa). The Inhibitor I9 domain occupies 36-120; it reads KYIVTFKSDV…AVEEDQVWHL (85 aa). The region spanning 130-403 is the Peptidase S8 domain; it reads PWGLGSISHK…PNLLAYNGNA (274 aa). Active-site charge relay system residues include Asp-162 and His-193. N-linked (GlcNAc...) asparagine glycans are attached at residues Asn-253 and Asn-309. The active-site Charge relay system is the Ser-349.

It belongs to the peptidase S8 family.

Its subcellular location is the secreted. The catalysed reaction is Hydrolysis of proteins with broad specificity, and of Bz-Arg-OEt &gt; Ac-Tyr-OEt. Does not hydrolyze peptide amides.. Its function is as follows. Secreted alkaline protease that allows assimilation of proteinaceous substrates. The sequence is that of Alkaline protease 1 (alp1) from Aspergillus flavus.